An 82-amino-acid chain; its full sequence is Exodeoxyribonuclease 7 small subunit (82 aa).

The protein belongs to the XseB family. As to quaternary structure, heterooligomer composed of large and small subunits.

It is found in the cytoplasm. The enzyme catalyses Exonucleolytic cleavage in either 5'- to 3'- or 3'- to 5'-direction to yield nucleoside 5'-phosphates.. Its function is as follows. Bidirectionally degrades single-stranded DNA into large acid-insoluble oligonucleotides, which are then degraded further into small acid-soluble oligonucleotides. This chain is Exodeoxyribonuclease 7 small subunit, found in Mycobacterium marinum (strain ATCC BAA-535 / M).